Reading from the N-terminus, the 520-residue chain is Cytochrome P450 monooxygenase TRI4 (520 aa).

Residues 10–30 (LVNIPISHAVGVVAASTVIYF) form a helical membrane-spanning segment. The N-linked (GlcNAc...) asparagine glycan is linked to Asn447. Cys455 is a binding site for heme.

This sequence belongs to the cytochrome P450 family. Heme is required as a cofactor.

It is found in the membrane. The protein operates within sesquiterpene biosynthesis; trichothecene biosynthesis. Cytochrome P450 monooxygenase; part of the core gene cluster that mediates the biosynthesis of trichothecenes, a very large family of chemically related bicyclic sesquiterpene compounds acting as mycotoxins, including T2-toxin. The biosynthesis of trichothecenes begins with the cyclization of farnesyl diphosphate to trichodiene and is catalyzed by the trichodiene synthase TRI5. Trichodiene undergoes a series of oxygenations catalyzed by the cytochrome P450 monooxygenase TRI4. TRI4 controls the addition of four oxygens at C-2, C-3, C-11, and the C-12, C-13-epoxide to form the intermediate isotrichotriol. Isotrichotriol then undergoes a non-enzymatic isomerization and cyclization to form isotrichodermol. During this process, the oxygen at the C-2 position becomes the pyran ring oxygen and the hydroxyl group at C-11 is lost. More complex type A trichothecenes are built by modifying isotrichodermol through a series of paired hydroxylation and acetylation or acylation steps. Isotrichodermol is converted to isotrichodermin by the acetyltransferase TRI101. TRI101 encodes a C-3 transacetylase that acts as a self-protection or resistance factor during biosynthesis and that the presence of a free C-3 hydroxyl group is a key component of Fusarium trichothecene phytotoxicity. A second hydroxyl group is added to C-15 by the trichothecene C-15 hydroxylase TRI11, producing 15-decalonectrin, which is then acetylated by TRI3, producing calonectrin. A third hydroxyl group is added at C-4 by the cytochrome P450 monooxygenase TRI13, converting calonectrin to 3,15-diacetoxyspirpenol, which is subsequently acetylated by the acetyltransferase TRI7. A fourth hydroxyl group is added to C-8 by the cytochrome P450 monooxygenase TRI1, followed by the addition of an isovaleryl moiety by TRI16. Finally, the acetyl group is removed from the C-3 position by the trichothecene C-3 esterase TRI8 to produce T-2 toxin. The chain is Cytochrome P450 monooxygenase TRI4 from Fusarium sporotrichioides.